Here is a 259-residue protein sequence, read N- to C-terminus: Peptide methionine sulfoxide reductase (259 aa).

Residues 66 to 90 form a disordered region; it reads TRTPADASMDQSSIAQGPDDDIPAP.

Belongs to the MsrA Met sulfoxide reductase family.

It catalyses the reaction L-methionyl-[protein] + [thioredoxin]-disulfide + H2O = L-methionyl-(S)-S-oxide-[protein] + [thioredoxin]-dithiol. The enzyme catalyses [thioredoxin]-disulfide + L-methionine + H2O = L-methionine (S)-S-oxide + [thioredoxin]-dithiol. Functionally, has an important function as a repair enzyme for proteins that have been inactivated by oxidation. Catalyzes the reversible oxidation-reduction of methionine sulfoxide in proteins to methionine. This is Peptide methionine sulfoxide reductase from Lactuca sativa (Garden lettuce).